The chain runs to 535 residues: Arginine-containing cyclodipeptide synthase anoA (535 aa).

The tract at residues 93–114 (LLSPPREPGPIDSETKTREKKS) is disordered. Positions 105–114 (SETKTREKKS) are enriched in basic and acidic residues. Residues 424 to 428 (DDIAE) carry the Conserved DDXXE motif motif.

Belongs to the arginine-containing cyclodipeptide synthase family.

The catalysed reaction is L-tryptophyl-tRNA(Trp) + L-arginyl-tRNA(Arg) = cyclo(L-arginyl-L-tryptophyl) + tRNA(Trp) + tRNA(Arg) + H(+). It functions in the pathway secondary metabolite biosynthesis. Functionally, arginine-containing cyclodipeptide synthase; part of the cluster that mediates the biosynthesis of a highly modified cyclo-arginine-tryptophan dipeptide (cRW). Within the pathway, AnoA acts as the scaffold-generating enzyme and is responsible for formation of the cyclo-Arg-Trp diketopiperazine (cRW) from L-arginyl-tRNA(Arg) + L-tryptophanyl-tRNA(Trp). Additional enzymes from the cluster then further modify the cyclo-Arg-Asp diketopiperazine (cRW) scaffold. This Aspergillus nomiae (Aspergillus nomius) protein is Arginine-containing cyclodipeptide synthase anoA.